Here is a 274-residue protein sequence, read N- to C-terminus: Thiazole synthase (274 aa).

The active-site Schiff-base intermediate with DXP is K115. Residues G176, 202–203, and 224–225 each bind 1-deoxy-D-xylulose 5-phosphate; these read AG and NS.

The protein belongs to the ThiG family. In terms of assembly, homotetramer. Forms heterodimers with either ThiH or ThiS.

It is found in the cytoplasm. It catalyses the reaction [ThiS sulfur-carrier protein]-C-terminal-Gly-aminoethanethioate + 2-iminoacetate + 1-deoxy-D-xylulose 5-phosphate = [ThiS sulfur-carrier protein]-C-terminal Gly-Gly + 2-[(2R,5Z)-2-carboxy-4-methylthiazol-5(2H)-ylidene]ethyl phosphate + 2 H2O + H(+). It functions in the pathway cofactor biosynthesis; thiamine diphosphate biosynthesis. Its function is as follows. Catalyzes the rearrangement of 1-deoxy-D-xylulose 5-phosphate (DXP) to produce the thiazole phosphate moiety of thiamine. Sulfur is provided by the thiocarboxylate moiety of the carrier protein ThiS. In vitro, sulfur can be provided by H(2)S. This chain is Thiazole synthase, found in Psychrobacter cryohalolentis (strain ATCC BAA-1226 / DSM 17306 / VKM B-2378 / K5).